Reading from the N-terminus, the 428-residue chain is Histidine--tRNA ligase (428 aa).

It belongs to the class-II aminoacyl-tRNA synthetase family. Homodimer.

The protein resides in the cytoplasm. It carries out the reaction tRNA(His) + L-histidine + ATP = L-histidyl-tRNA(His) + AMP + diphosphate + H(+). This Lactobacillus gasseri (strain ATCC 33323 / DSM 20243 / BCRC 14619 / CIP 102991 / JCM 1131 / KCTC 3163 / NCIMB 11718 / NCTC 13722 / AM63) protein is Histidine--tRNA ligase.